The following is a 438-amino-acid chain: Beta-1,3-galactosyl-O-glycosyl-glycoprotein beta-1,6-N-acetylglucosaminyltransferase 3 (438 aa).

Over 1–6 the chain is Cytoplasmic; that stretch reads MVQWKR. Residues 7–26 form a helical; Signal-anchor for type II membrane protein membrane-spanning segment; sequence LCQLHYLWALGCYMLLATVA. Over 27–438 the chain is Lumenal; sequence LKLSFRLKCD…RYKAIYGTEL (412 aa). 4 disulfide bridges follow: Cys70-Cys227, Cys161-Cys382, Cys182-Cys209, and Cys391-Cys423. Asn289 carries an N-linked (GlcNAc...) asparagine glycan.

The protein belongs to the glycosyltransferase 14 family. N-glycosylated. In terms of tissue distribution, primarily expressed in mucus-secreting tissues. Expressed in colon, kidney, small intestine, trachea, and stomach, where mucin is produced.

The protein localises to the golgi apparatus membrane. It catalyses the reaction a 3-O-[beta-D-galactosyl-(1-&gt;3)-N-acetyl-alpha-D-galactosaminyl]-L-seryl-[protein] + UDP-N-acetyl-alpha-D-glucosamine = 3-O-{beta-D-galactosyl-(1-&gt;3)-[N-acetyl-beta-D-glucosaminyl-(1-&gt;6)]-N-acetyl-alpha-D-galactosaminyl}-L-seryl-[protein] + UDP + H(+). It carries out the reaction a 3-O-[beta-D-galactosyl-(1-&gt;3)-N-acetyl-alpha-D-galactosaminyl]-L-threonyl-[protein] + UDP-N-acetyl-alpha-D-glucosamine = a 3-O-{beta-D-galactosyl-(1-&gt;3)-[N-acetyl-beta-D-glucosaminyl-(1-&gt;6)]-N-acetyl-alpha-D-galactosaminyl}-L-threonyl-[protein] + UDP + H(+). The catalysed reaction is a beta-D-Gal-(1-&gt;4)-beta-D-GlcNAc-(1-&gt;3)-beta-D-Gal-(1-&gt;4)-beta-D-GlcNAc derivative + UDP-N-acetyl-alpha-D-glucosamine = a beta-D-Gal-(1-&gt;4)-beta-D-GlcNAc-(1-&gt;3)-[beta-D-GlcNAc-(1-&gt;6)]-beta-D-Gal-(1-&gt;4)-N-acetyl-beta-D-glucosaminyl derivative + UDP + H(+). The enzyme catalyses 3-O-[N-acetyl-beta-D-glucosaminyl-(1-&gt;3)-N-acetyl-alpha-D-galactosaminyl]-L-seryl-[protein] + UDP-N-acetyl-alpha-D-glucosamine = 3-O-[N-acetyl-beta-D-glucosaminyl-(1-&gt;3)-[N-acetyl-beta-D-glucosaminyl-(1-&gt;6)]-N-acetyl-alpha-D-galactosaminyl]-L-seryl-[protein] + UDP + H(+). It catalyses the reaction a 3-O-[N-acetyl-beta-D-glucosaminyl-(1-&gt;3)-N-acetyl-alpha-D-galactosaminyl]-L-threonyl-[protein] + UDP-N-acetyl-alpha-D-glucosamine = 3-O-[N-acetyl-beta-D-glucosaminyl-(1-&gt;3)-[N-acetyl-beta-D-glucosaminyl-(1-&gt;6)]-N-acetyl-alpha-D-galactosaminyl]-L-threonyl-[protein] + UDP + H(+). Its pathway is protein modification; protein glycosylation. In terms of biological role, glycosyltransferase that can synthesize all known mucin beta 6 N-acetylglucosaminides. Mediates core 2 and core 4 O-glycan branching, 2 important steps in mucin-type biosynthesis. Also has I-branching enzyme activity by converting linear into branched poly-N-acetyllactosaminoglycans, leading to introduce the blood group I antigen during embryonic development. This is Beta-1,3-galactosyl-O-glycosyl-glycoprotein beta-1,6-N-acetylglucosaminyltransferase 3 (GCNT3) from Homo sapiens (Human).